Consider the following 276-residue polypeptide: Dermonecrotic toxin LlSicTox-alphaIV3 (276 aa).

His5 is an active-site residue. 2 residues coordinate Mg(2+): Glu25 and Asp27. The active-site Nucleophile is His41. Intrachain disulfides connect Cys45–Cys51 and Cys47–Cys192. Asp85 is a Mg(2+) binding site.

The protein belongs to the arthropod phospholipase D family. Class II subfamily. The cofactor is Mg(2+). Expressed by the venom gland.

It localises to the secreted. The catalysed reaction is an N-(acyl)-sphingosylphosphocholine = an N-(acyl)-sphingosyl-1,3-cyclic phosphate + choline. The enzyme catalyses an N-(acyl)-sphingosylphosphoethanolamine = an N-(acyl)-sphingosyl-1,3-cyclic phosphate + ethanolamine. It carries out the reaction a 1-acyl-sn-glycero-3-phosphocholine = a 1-acyl-sn-glycero-2,3-cyclic phosphate + choline. It catalyses the reaction a 1-acyl-sn-glycero-3-phosphoethanolamine = a 1-acyl-sn-glycero-2,3-cyclic phosphate + ethanolamine. Dermonecrotic toxins cleave the phosphodiester linkage between the phosphate and headgroup of certain phospholipids (sphingolipid and lysolipid substrates), forming an alcohol (often choline) and a cyclic phosphate. This toxin acts on sphingomyelin (SM). It may also act on ceramide phosphoethanolamine (CPE), lysophosphatidylcholine (LPC) and lysophosphatidylethanolamine (LPE), but not on lysophosphatidylserine (LPS), and lysophosphatidylglycerol (LPG). It acts by transphosphatidylation, releasing exclusively cyclic phosphate products as second products. Induces dermonecrosis, hemolysis, increased vascular permeability, edema, inflammatory response, and platelet aggregation. This chain is Dermonecrotic toxin LlSicTox-alphaIV3, found in Loxosceles laeta (South American recluse spider).